Reading from the N-terminus, the 754-residue chain is 5-methyltetrahydropteroyltriglutamate--homocysteine methyltransferase (754 aa).

5-methyltetrahydropteroyltri-L-glutamate is bound by residues 17-20 (RELK) and Lys117. L-homocysteine-binding positions include 431–433 (IGS) and Glu484. Residues 431 to 433 (IGS) and Glu484 contribute to the L-methionine site. 5-methyltetrahydropteroyltri-L-glutamate is bound by residues 515 to 516 (RC) and Trp561. An L-homocysteine-binding site is contributed by Asp599. Residue Asp599 participates in L-methionine binding. Glu605 serves as a coordination point for 5-methyltetrahydropteroyltri-L-glutamate. Zn(2+) contacts are provided by His641, Cys643, and Glu665. His694 acts as the Proton donor in catalysis. Cys726 provides a ligand contact to Zn(2+).

This sequence belongs to the vitamin-B12 independent methionine synthase family. Zn(2+) serves as cofactor.

The catalysed reaction is 5-methyltetrahydropteroyltri-L-glutamate + L-homocysteine = tetrahydropteroyltri-L-glutamate + L-methionine. The protein operates within amino-acid biosynthesis; L-methionine biosynthesis via de novo pathway; L-methionine from L-homocysteine (MetE route): step 1/1. Functionally, catalyzes the transfer of a methyl group from 5-methyltetrahydrofolate to homocysteine resulting in methionine formation. The polypeptide is 5-methyltetrahydropteroyltriglutamate--homocysteine methyltransferase (Salmonella typhimurium (strain LT2 / SGSC1412 / ATCC 700720)).